Consider the following 146-residue polypeptide: Large ribosomal subunit protein uL15 (146 aa).

The interval 1 to 51 (MKLHELQPAAGSRKVRNRVGRGTSSGNGKTAGRGQKGQKARSGGGVRLGFE) is disordered. 2 stretches are compositionally biased toward gly residues: residues 23 to 35 (TSSG…GRGQ) and 42 to 51 (SGGGVRLGFE).

This sequence belongs to the universal ribosomal protein uL15 family. In terms of assembly, part of the 50S ribosomal subunit.

Binds to the 23S rRNA. This chain is Large ribosomal subunit protein uL15, found in Streptococcus gordonii (strain Challis / ATCC 35105 / BCRC 15272 / CH1 / DL1 / V288).